We begin with the raw amino-acid sequence, 430 residues long: MHDIRAIRENPAAFDAALALRNLPPVSPEILSLDADRRSRIAAAEAAQAEQNKASKEAGAAKGRGDEAEFQRLRALVTAKKDETARLQAEATALDAKLRELLLAVPNLPLDGVPPGKDEDDNVEIRRWGEPRAFDFAPREHFEIEGVRPGMDFETAAKLSGSRFVVLKGGVARVHRALAQFMLDLHTEEHGLAETWAPVLVLSEMMEGTGQLPKFGEDSYQTREGWWLIPTSEVTLTNTVNGDLVDHASLPRRMVAHSQCFRSEAGSAGRDTSGMLRQHQFEKVEMVSITDAESGVEEHARMTRCAEAVLERLGLPYRTIVLCGGDMGFGARITHDLEVWLPGQGKYREISSVSYCGDFQARRMNARYRPAGGGKPEFVHTLNGSGLAVGRTLIAVLENGQQADGSVKLPEVLHPYLGGRTRLGADGVLA.

Residues 47 to 66 (AQAEQNKASKEAGAAKGRGD) form a disordered region. Residue 231-233 (TSE) participates in L-serine binding. 262-264 (RSE) provides a ligand contact to ATP. Glutamate 285 is an L-serine binding site. 349–352 (EISS) lines the ATP pocket. Serine 385 serves as a coordination point for L-serine.

The protein belongs to the class-II aminoacyl-tRNA synthetase family. Type-1 seryl-tRNA synthetase subfamily. As to quaternary structure, homodimer. The tRNA molecule binds across the dimer.

The protein resides in the cytoplasm. It catalyses the reaction tRNA(Ser) + L-serine + ATP = L-seryl-tRNA(Ser) + AMP + diphosphate + H(+). The enzyme catalyses tRNA(Sec) + L-serine + ATP = L-seryl-tRNA(Sec) + AMP + diphosphate + H(+). It functions in the pathway aminoacyl-tRNA biosynthesis; selenocysteinyl-tRNA(Sec) biosynthesis; L-seryl-tRNA(Sec) from L-serine and tRNA(Sec): step 1/1. Catalyzes the attachment of serine to tRNA(Ser). Is also able to aminoacylate tRNA(Sec) with serine, to form the misacylated tRNA L-seryl-tRNA(Sec), which will be further converted into selenocysteinyl-tRNA(Sec). The sequence is that of Serine--tRNA ligase from Paracoccus denitrificans (strain Pd 1222).